The sequence spans 65 residues: Beta-defensin 106A (65 aa).

Residues 1 to 20 (MRTFLFLFAVLFFLTPAKNA) form the signal peptide. Cystine bridges form between C26/C53, C33/C47, and C37/C54.

This sequence belongs to the beta-defensin family. As to quaternary structure, monomer. Interacts with CCR2 (via extracellular N-terminal region); this interaction may preferentially require specific tyrosine sulfation on CCR2.

The protein resides in the secreted. The protein localises to the membrane. Functionally, has antibacterial activity. Acts as a ligand for C-C chemokine receptor CCR2. The sequence is that of Beta-defensin 106A (DEFB106A) from Gorilla gorilla gorilla (Western lowland gorilla).